Consider the following 195-residue polypeptide: HTH-type transcriptional regulator BetI (195 aa).

An HTH tetR-type domain is found at 8–68 (EIRRAQLIDA…ATMRHVLRDL (61 aa)). A DNA-binding region (H-T-H motif) is located at residues 31 to 50 (TLASVAQRASISTGIVSHYF).

Its pathway is amine and polyamine biosynthesis; betaine biosynthesis via choline pathway [regulation]. Functionally, repressor involved in the biosynthesis of the osmoprotectant glycine betaine. It represses transcription of the choline transporter BetT and the genes of BetAB involved in the synthesis of glycine betaine. The polypeptide is HTH-type transcriptional regulator BetI (Paraburkholderia phytofirmans (strain DSM 17436 / LMG 22146 / PsJN) (Burkholderia phytofirmans)).